Reading from the N-terminus, the 194-residue chain is ATP-dependent Clp protease proteolytic subunit (194 aa).

Serine 99 functions as the Nucleophile in the catalytic mechanism. The active site involves histidine 124.

The protein belongs to the peptidase S14 family. As to quaternary structure, fourteen ClpP subunits assemble into 2 heptameric rings which stack back to back to give a disk-like structure with a central cavity, resembling the structure of eukaryotic proteasomes.

The protein resides in the cytoplasm. It carries out the reaction Hydrolysis of proteins to small peptides in the presence of ATP and magnesium. alpha-casein is the usual test substrate. In the absence of ATP, only oligopeptides shorter than five residues are hydrolyzed (such as succinyl-Leu-Tyr-|-NHMec, and Leu-Tyr-Leu-|-Tyr-Trp, in which cleavage of the -Tyr-|-Leu- and -Tyr-|-Trp bonds also occurs).. Functionally, cleaves peptides in various proteins in a process that requires ATP hydrolysis. Has a chymotrypsin-like activity. Plays a major role in the degradation of misfolded proteins. This is ATP-dependent Clp protease proteolytic subunit from Borrelia garinii subsp. bavariensis (strain ATCC BAA-2496 / DSM 23469 / PBi) (Borreliella bavariensis).